The primary structure comprises 281 residues: Pantothenate synthetase (281 aa).

ATP is bound at residue 31 to 38; the sequence is MGNLHAGH. The Proton donor role is filled by histidine 38. Glutamine 62 is a binding site for (R)-pantoate. Glutamine 62 is a beta-alanine binding site. 150–153 is an ATP binding site; the sequence is GKKD. Residue glutamine 156 coordinates (R)-pantoate. Residues valine 179 and 187–190 contribute to the ATP site; that span reads MSSR.

Belongs to the pantothenate synthetase family. Homodimer.

The protein localises to the cytoplasm. The catalysed reaction is (R)-pantoate + beta-alanine + ATP = (R)-pantothenate + AMP + diphosphate + H(+). The protein operates within cofactor biosynthesis; (R)-pantothenate biosynthesis; (R)-pantothenate from (R)-pantoate and beta-alanine: step 1/1. Functionally, catalyzes the condensation of pantoate with beta-alanine in an ATP-dependent reaction via a pantoyl-adenylate intermediate. This Xylella fastidiosa (strain M12) protein is Pantothenate synthetase.